Here is a 109-residue protein sequence, read N- to C-terminus: uncharacterized protein (109 aa).

This is an uncharacterized protein from Escherichia coli (strain K12).